The chain runs to 4763 residues: Nonribosomal peptide synthetase sidC (4763 aa).

Positions 1–24 (MAGTANPADEGLTGPTETTNHINS) are disordered. A compositionally biased stretch (polar residues) spans 15–24 (PTETTNHINS). An adenylation 1 region spans residues 296–815 (STVAEHSTLT…SSGKVDRNSI (520 aa)). The Carrier 1 domain maps to 853 to 930 (EKALELRTLV…GLLTLILNGK (78 aa)). Serine 890 is modified (O-(pantetheine 4'-phosphoryl)serine). A condensation 1 region spans residues 1003 to 1396 (TRSYIYHSVI…DIIAFILQNP (394 aa)). Positions 1398–1951 (GDFENALLYT…AKTDRRALQA (554 aa)) are adenylation 2. The region spanning 1979-2055 (LVASDAMEKI…DLARLCTSSS (77 aa)) is the Carrier 2 domain. Serine 2016 is subject to O-(pantetheine 4'-phosphoryl)serine. The tract at residues 2092–2423 (TPIQESLLSE…HIHAREVRRM (332 aa)) is condensation 2. The tract at residues 2556–3070 (ELNAREHPEW…MSGKANIKEL (515 aa)) is adenylation 3. The region spanning 3099 to 3175 (RPLSSDEEAV…QLAQLPRKST (77 aa)) is the Carrier 3 domain. Serine 3136 carries the post-translational modification O-(pantetheine 4'-phosphoryl)serine. The interval 3217–3626 (PLQEGLVARS…DDIALDSFSL (410 aa)) is condensation 3. The region spanning 3647 to 3720 (SATETKIRDL…ALAEHVDERS (74 aa)) is the Carrier 4 domain. O-(pantetheine 4'-phosphoryl)serine is present on serine 3681. Residues 3761–4093 (TPLQAGMITR…SLFDTLFVFQ (333 aa)) are condensation 4. In terms of domain architecture, Carrier 5 spans 4204-4277 (PAHESIIRDV…GISARIISPV (74 aa)). Serine 4238 is modified (O-(pantetheine 4'-phosphoryl)serine). Positions 4344–4593 (ERIDSGKLEE…PCLNVTPFTF (250 aa)) are condensation 5.

This sequence belongs to the NRP synthetase family.

It functions in the pathway siderophore biosynthesis. In terms of biological role, nonribosomal peptide synthase; part of the siderophore biosynthetic pathway. Aspergillus fumigatus produces four types of siderophores, low-molecular-mass iron chelators, including excreted fusarinine C (FsC) and triacetylfusarinine C (TAFC) for iron uptake; and intacellular ferricrocin (FC) for hyphal and hydroxyferricrocin (HFC) for conidial iron distribution and storage. TAFC consists of three N(2)-acetyl-N(5)-anhydromevalonyl-N(5)-hydroxyornithine residues cyclically linked by ester bonds; FC is a cyclic hexapeptide with the structure Gly-Ser-Gly-(N(5)-acetyl-N(5)-hydroxyornithine)x3. The biosynthesis of all four siderophores depends on the hydroxylation of ornithine, catalyzed by the monooxygenase sidA. Subsequently, the pathways for biosynthesis of extra- and intracellular siderophores split. For biosynthesis of extracellular siderophores, the transacylase sidF transfers anhydromevalonyl to N(5)-hydroxyornithine. The required anhydromevalonyl-CoA moiety is derived from mevalonate by CoA ligation and dehydration catalyzed by sidI and sidH respectively. The acetylation of N(5)-hydroxyornithine for FC biosynthesis involves the constitutively expressed sidL. FC is hydroxylated to HFC by an as yet uncharacterized enzyme during conidiation. Assembly of fusarinine C (FsC) and FC is catalyzed by two different nonribosomal peptide synthetases (NRPS), sidD and sidC respectively. Subsequently, sidG catalyzes N2-acetylation of FsC for forming TAFC. Both extra- and intracellular siderophores are crucial for growth during iron limitation and virulence. In Aspergillus fumigatus (strain ATCC MYA-4609 / CBS 101355 / FGSC A1100 / Af293) (Neosartorya fumigata), this protein is Nonribosomal peptide synthetase sidC.